A 428-amino-acid chain; its full sequence is 5'-nucleotidase domain-containing protein 4 (428 aa).

The active-site Nucleophile is the aspartate 22. Positions 22, 24, and 317 each coordinate Mg(2+). Aspartate 24 acts as the Proton donor in catalysis.

This sequence belongs to the 5'(3')-deoxyribonucleotidase family.

This Homo sapiens (Human) protein is 5'-nucleotidase domain-containing protein 4 (NT5DC4).